A 673-amino-acid polypeptide reads, in one-letter code: UvrABC system protein B (673 aa).

Residues 26 to 183 form the Helicase ATP-binding domain; that stretch reads EGLEDGLAHQ…RRLAELQYTR (158 aa). Position 39–46 (39–46) interacts with ATP; that stretch reads GVTGSGKT. The Beta-hairpin motif lies at 92–115; the sequence is YYDYYQPEAYVPSSDTFIEKDASV. Residues 431–597 form the Helicase C-terminal domain; that stretch reads QVDDLLSEIR…GLNKKVVDIL (167 aa). The tract at residues 608-627 is disordered; the sequence is AKGRGKSRPIVEPDNVPMDM. The UVR domain occupies 633–668; it reads QQKIHELEGLMMQHAQNLEFEEAAQIRDQLHQLREL.

This sequence belongs to the UvrB family. Forms a heterotetramer with UvrA during the search for lesions. Interacts with UvrC in an incision complex.

It is found in the cytoplasm. The UvrABC repair system catalyzes the recognition and processing of DNA lesions. A damage recognition complex composed of 2 UvrA and 2 UvrB subunits scans DNA for abnormalities. Upon binding of the UvrA(2)B(2) complex to a putative damaged site, the DNA wraps around one UvrB monomer. DNA wrap is dependent on ATP binding by UvrB and probably causes local melting of the DNA helix, facilitating insertion of UvrB beta-hairpin between the DNA strands. Then UvrB probes one DNA strand for the presence of a lesion. If a lesion is found the UvrA subunits dissociate and the UvrB-DNA preincision complex is formed. This complex is subsequently bound by UvrC and the second UvrB is released. If no lesion is found, the DNA wraps around the other UvrB subunit that will check the other stand for damage. The sequence is that of UvrABC system protein B from Escherichia fergusonii (strain ATCC 35469 / DSM 13698 / CCUG 18766 / IAM 14443 / JCM 21226 / LMG 7866 / NBRC 102419 / NCTC 12128 / CDC 0568-73).